The following is a 304-amino-acid chain: MQIQILGSAAGGGFPQWNCNCRNCRGVRAGTLRAQPRTQSSIAISDEGEQWILCNASPDIRAQIEAFPALQPARKLRDTAIAGIVLLDSQIDHCTGLLTLREGCPHQVWCTEMVHQDLTTGFPLFNMLSHWNGGLQHRLIELDAKPFSIPACPGLRINAIALRSSAPPYSPHRGNPHPGDNIGLFIEDLRTGGTLFYAPGLGQVDEQLLGWMRRADCLLVDGTLWRDDEMRVCEVGDKLGSEMGHLCQSGPGGMIELLDGLPTARKILIHINNTNPILDLDSPERAELDAHGIEVAFDGMSIVL.

It belongs to the PqqB family.

The protein operates within cofactor biosynthesis; pyrroloquinoline quinone biosynthesis. May be involved in the transport of PQQ or its precursor to the periplasm. In Ectopseudomonas mendocina (strain ymp) (Pseudomonas mendocina), this protein is Coenzyme PQQ synthesis protein B.